The primary structure comprises 539 residues: Hydroxylamine reductase (539 aa).

Residues Cys-3, Cys-6, Cys-15, and Cys-21 each contribute to the [4Fe-4S] cluster site. His-235, Glu-259, Cys-303, Cys-394, Cys-422, Cys-447, Glu-482, and Lys-484 together coordinate hybrid [4Fe-2O-2S] cluster. At Cys-394 the chain carries Cysteine persulfide.

The protein belongs to the HCP family. [4Fe-4S] cluster serves as cofactor. Requires hybrid [4Fe-2O-2S] cluster as cofactor.

The protein resides in the cytoplasm. It catalyses the reaction A + NH4(+) + H2O = hydroxylamine + AH2 + H(+). Catalyzes the reduction of hydroxylamine to form NH(3) and H(2)O. In Methanocaldococcus jannaschii (strain ATCC 43067 / DSM 2661 / JAL-1 / JCM 10045 / NBRC 100440) (Methanococcus jannaschii), this protein is Hydroxylamine reductase.